A 260-amino-acid chain; its full sequence is NAD-capped RNA hydrolase NudC (260 aa).

R69 serves as a coordination point for substrate. Residues C98 and C101 each coordinate Zn(2+). Residue E111 participates in substrate binding. Zn(2+)-binding residues include C116 and C119. Y124 provides a ligand contact to substrate. Positions 125–248 (PQIAPCIIVA…TVARRLIEDT (124 aa)) constitute a Nudix hydrolase domain. Residues A158, E174, and E178 each contribute to the a divalent metal cation site. A Nudix box motif is present at residues 159–180 (GFVEVGETLEQTVVREVMEESQ). 192–199 (QPWPFPHS) contacts substrate. An a divalent metal cation-binding site is contributed by E219. A241 provides a ligand contact to substrate.

This sequence belongs to the Nudix hydrolase family. NudC subfamily. As to quaternary structure, homodimer. Requires Mg(2+) as cofactor. The cofactor is Mn(2+). It depends on Zn(2+) as a cofactor.

It catalyses the reaction a 5'-end NAD(+)-phospho-ribonucleoside in mRNA + H2O = a 5'-end phospho-adenosine-phospho-ribonucleoside in mRNA + beta-nicotinamide D-ribonucleotide + 2 H(+). The enzyme catalyses NAD(+) + H2O = beta-nicotinamide D-ribonucleotide + AMP + 2 H(+). It carries out the reaction NADH + H2O = reduced beta-nicotinamide D-ribonucleotide + AMP + 2 H(+). MRNA decapping enzyme that specifically removes the nicotinamide adenine dinucleotide (NAD) cap from a subset of mRNAs by hydrolyzing the diphosphate linkage to produce nicotinamide mononucleotide (NMN) and 5' monophosphate mRNA. The NAD-cap is present at the 5'-end of some mRNAs and stabilizes RNA against 5'-processing. Has preference for mRNAs with a 5'-end purine. Catalyzes the hydrolysis of a broad range of dinucleotide pyrophosphates. This is NAD-capped RNA hydrolase NudC from Pectobacterium atrosepticum (strain SCRI 1043 / ATCC BAA-672) (Erwinia carotovora subsp. atroseptica).